Consider the following 508-residue polypeptide: MNKKLKDVLLKLDQDLIKHVKGSLDLEISGVTYSSKLVLPRYVFFALPGIRFDGHDFIETAIQKGSNVIVCSRDMDFYSPNVTYIKVDDFNIRKFMSNFSNIFYDEPSKKLKVIGVTGTDGKSSVCYYIYLLLKKKGVKVGFISTVFFDDGNGSLIKNPYRQSTPESTEIHLFLSNMVKNNVQYAILESTSHGLDLKTARLIDVNYFAVVFTNIGHEHLEFHGTIQNYLNAKLGLFRSVSDDAGFGVINFDDPYYSDFKNAVKKSFTYSLKSSKADFFVSFIDEKIDSTRFEFYHKGVKYFANVSLLGSFNVENIMAALILVSQILNSDIQDIVDKLICIKSLDGRMDSVNLGQNFSVIIDYAHTPGAFSKLFPIFKRFATNRLISVFGSAGERDVAKRFLQGQIADIYSDLIVLCDEDPRGENSMYIIKDIAKGIVNKVVNQDLFFIPDRRLAIEKAISLARAGDLVVALGKGHENSIIYKNKELFWNEQEAVKNAILSLEESEKDR.

Position 35 (Ser-35) interacts with UDP-N-acetyl-alpha-D-muramoyl-L-alanyl-D-glutamate. Gly-118–Ser-124 is a binding site for ATP. Residues Ser-163–Thr-164, Thr-190, and Arg-200 each bind UDP-N-acetyl-alpha-D-muramoyl-L-alanyl-D-glutamate. An N6-carboxylysine modification is found at Lys-232.

Belongs to the MurCDEF family. MurE subfamily. In terms of processing, carboxylation is probably crucial for Mg(2+) binding and, consequently, for the gamma-phosphate positioning of ATP.

It localises to the cytoplasm. It participates in cell wall biogenesis; peptidoglycan biosynthesis. In terms of biological role, catalyzes the addition of an amino acid to the nucleotide precursor UDP-N-acetylmuramoyl-L-alanyl-D-glutamate (UMAG) in the biosynthesis of bacterial cell-wall peptidoglycan. The polypeptide is UDP-N-acetylmuramyl-tripeptide synthetase (Borrelia garinii subsp. bavariensis (strain ATCC BAA-2496 / DSM 23469 / PBi) (Borreliella bavariensis)).